Consider the following 688-residue polypeptide: Homoaconitase, mitochondrial (688 aa).

3 residues coordinate [4Fe-4S] cluster: Cys335, Cys395, and Cys398. A disordered region spans residues 468–494 (SIDLPKSSGNTGATSEEPISEDDTSEA).

This sequence belongs to the aconitase/IPM isomerase family. Requires [4Fe-4S] cluster as cofactor.

Its subcellular location is the mitochondrion. The enzyme catalyses (2R,3S)-homoisocitrate = cis-homoaconitate + H2O. It functions in the pathway amino-acid biosynthesis; L-lysine biosynthesis via AAA pathway; L-alpha-aminoadipate from 2-oxoglutarate: step 3/5. In terms of biological role, catalyzes the reversible hydration of cis-homoaconitate to (2R,3S)-homoisocitrate, a step in the alpha-aminoadipate pathway for lysine biosynthesis. This Candida parapsilosis (Yeast) protein is Homoaconitase, mitochondrial (LYS4).